A 216-amino-acid polypeptide reads, in one-letter code: RNA pyrophosphohydrolase (216 aa).

The 144-residue stretch at Gly-6–Thr-149 folds into the Nudix hydrolase domain. The Nudix box motif lies at Gly-38–Gly-59. Residues Ala-159–Thr-191 are disordered.

The protein belongs to the Nudix hydrolase family. RppH subfamily. Requires a divalent metal cation as cofactor.

Accelerates the degradation of transcripts by removing pyrophosphate from the 5'-end of triphosphorylated RNA, leading to a more labile monophosphorylated state that can stimulate subsequent ribonuclease cleavage. This is RNA pyrophosphohydrolase from Burkholderia pseudomallei (strain 668).